The following is a 473-amino-acid chain: Trigger factor (473 aa).

The region spanning Gly174 to Pro261 is the PPIase FKBP-type domain. The tract at residues Ala442 to Asn473 is disordered. Low complexity predominate over residues Lys444–Ala453. Over residues Thr454–Val467 the composition is skewed to basic residues.

The protein belongs to the FKBP-type PPIase family. Tig subfamily.

It is found in the cytoplasm. It catalyses the reaction [protein]-peptidylproline (omega=180) = [protein]-peptidylproline (omega=0). Its function is as follows. Involved in protein export. Acts as a chaperone by maintaining the newly synthesized protein in an open conformation. Functions as a peptidyl-prolyl cis-trans isomerase. This chain is Trigger factor, found in Prochlorococcus marinus subsp. pastoris (strain CCMP1986 / NIES-2087 / MED4).